Consider the following 496-residue polypeptide: Glutamyl-tRNA(Gln) amidotransferase subunit A (496 aa).

Active-site charge relay system residues include Lys75 and Ser150. The active-site Acyl-ester intermediate is the Ser174.

Belongs to the amidase family. GatA subfamily. As to quaternary structure, heterotrimer of A, B and C subunits.

The catalysed reaction is L-glutamyl-tRNA(Gln) + L-glutamine + ATP + H2O = L-glutaminyl-tRNA(Gln) + L-glutamate + ADP + phosphate + H(+). Functionally, allows the formation of correctly charged Gln-tRNA(Gln) through the transamidation of misacylated Glu-tRNA(Gln) in organisms which lack glutaminyl-tRNA synthetase. The reaction takes place in the presence of glutamine and ATP through an activated gamma-phospho-Glu-tRNA(Gln). The sequence is that of Glutamyl-tRNA(Gln) amidotransferase subunit A from Burkholderia vietnamiensis (strain G4 / LMG 22486) (Burkholderia cepacia (strain R1808)).